The following is a 437-amino-acid chain: UDP-N-acetylmuramoylalanine--D-glutamate ligase (437 aa).

112–118 lines the ATP pocket; it reads GSNGKST.

The protein belongs to the MurCDEF family.

It localises to the cytoplasm. The catalysed reaction is UDP-N-acetyl-alpha-D-muramoyl-L-alanine + D-glutamate + ATP = UDP-N-acetyl-alpha-D-muramoyl-L-alanyl-D-glutamate + ADP + phosphate + H(+). The protein operates within cell wall biogenesis; peptidoglycan biosynthesis. Functionally, cell wall formation. Catalyzes the addition of glutamate to the nucleotide precursor UDP-N-acetylmuramoyl-L-alanine (UMA). This is UDP-N-acetylmuramoylalanine--D-glutamate ligase from Haemophilus influenzae (strain PittGG).